Reading from the N-terminus, the 339-residue chain is Dihydroorotate dehydrogenase (quinone) (339 aa).

FMN-binding positions include 62–66 (AGMDK) and Thr-86. A substrate-binding site is contributed by Lys-66. Position 111–115 (111–115 (NRMGF)) interacts with substrate. The FMN site is built by Asn-139 and Asn-172. Position 172 (Asn-172) interacts with substrate. Ser-175 serves as the catalytic Nucleophile. Asn-177 contacts substrate. Residues Lys-217 and Thr-245 each contribute to the FMN site. 246–247 (NT) serves as a coordination point for substrate. Residues Gly-268, Gly-297, and 318–319 (FS) each bind FMN.

Belongs to the dihydroorotate dehydrogenase family. Type 2 subfamily. Monomer. It depends on FMN as a cofactor.

The protein localises to the cell membrane. The enzyme catalyses (S)-dihydroorotate + a quinone = orotate + a quinol. The protein operates within pyrimidine metabolism; UMP biosynthesis via de novo pathway; orotate from (S)-dihydroorotate (quinone route): step 1/1. Functionally, catalyzes the conversion of dihydroorotate to orotate with quinone as electron acceptor. This Shewanella halifaxensis (strain HAW-EB4) protein is Dihydroorotate dehydrogenase (quinone).